Consider the following 574-residue polypeptide: Serine hydroxymethyltransferase (574 aa).

180–182 (GHL) contributes to the (6S)-5,6,7,8-tetrahydrofolate binding site. An N6-(pyridoxal phosphate)lysine modification is found at lysine 288. (6S)-5,6,7,8-tetrahydrofolate is bound at residue glutamate 306.

Belongs to the SHMT family. As to quaternary structure, homodimer. Pyridoxal 5'-phosphate serves as cofactor.

It is found in the cytoplasm. The enzyme catalyses (6R)-5,10-methylene-5,6,7,8-tetrahydrofolate + glycine + H2O = (6S)-5,6,7,8-tetrahydrofolate + L-serine. It participates in one-carbon metabolism; tetrahydrofolate interconversion. It functions in the pathway amino-acid biosynthesis; glycine biosynthesis; glycine from L-serine: step 1/1. Catalyzes the reversible interconversion of serine and glycine with tetrahydrofolate (THF) serving as the one-carbon carrier. This reaction serves as the major source of one-carbon groups required for the biosynthesis of purines, thymidylate, methionine, and other important biomolecules. Also exhibits THF-independent aldolase activity toward beta-hydroxyamino acids, producing glycine and aldehydes, via a retro-aldol mechanism. The chain is Serine hydroxymethyltransferase from Treponema pallidum (strain Nichols).